Here is a 953-residue protein sequence, read N- to C-terminus: Factor arrest protein 11 (953 aa).

2 positions are modified to phosphoserine: Ser-18 and Ser-81. The interval Asp-104–Val-160 is disordered. Residues Asp-114–Asn-134 show a composition bias toward basic and acidic residues. Acidic residues predominate over residues Phe-141–Val-160. Phosphoserine occurs at positions 524, 527, and 528.

Belongs to the FAR11 family. In terms of assembly, component of a complex at least composed of FAR3, FAR7, FAR8, FAR10, FAR11 and VPS64.

Participates in the control of the reentry into the cell cycle following pheromone treatment. The polypeptide is Factor arrest protein 11 (FAR11) (Saccharomyces cerevisiae (strain ATCC 204508 / S288c) (Baker's yeast)).